A 65-amino-acid polypeptide reads, in one-letter code: Toxin Cbi1 (65 aa).

The region spanning 1–64 is the LCN-type CS-alpha/beta domain; the sequence is KDGYPMDNKG…VWDRATNKCR (64 aa). 4 disulfides stabilise this stretch: cysteine 11-cysteine 63, cysteine 15-cysteine 37, cysteine 22-cysteine 44, and cysteine 26-cysteine 46.

The protein belongs to the long (4 C-C) scorpion toxin superfamily. Sodium channel inhibitor family. Beta subfamily. As to expression, expressed by the venom gland.

It is found in the secreted. Functionally, beta toxins bind voltage-independently at site-4 of sodium channels (Nav) and shift the voltage of activation toward more negative potentials thereby affecting sodium channel activation and promoting spontaneous and repetitive firing. This chain is Toxin Cbi1, found in Centruroides bicolor (Scorpion).